A 438-amino-acid polypeptide reads, in one-letter code: Serine--tRNA ligase (438 aa).

245–247 serves as a coordination point for L-serine; it reads TSE. 276–278 contributes to the ATP binding site; the sequence is RSE. Glu299 is a binding site for L-serine. 363–366 contributes to the ATP binding site; the sequence is EISS. Ser398 serves as a coordination point for L-serine.

Belongs to the class-II aminoacyl-tRNA synthetase family. Type-1 seryl-tRNA synthetase subfamily. In terms of assembly, homodimer. The tRNA molecule binds across the dimer.

It localises to the cytoplasm. It catalyses the reaction tRNA(Ser) + L-serine + ATP = L-seryl-tRNA(Ser) + AMP + diphosphate + H(+). The enzyme catalyses tRNA(Sec) + L-serine + ATP = L-seryl-tRNA(Sec) + AMP + diphosphate + H(+). The protein operates within aminoacyl-tRNA biosynthesis; selenocysteinyl-tRNA(Sec) biosynthesis; L-seryl-tRNA(Sec) from L-serine and tRNA(Sec): step 1/1. Functionally, catalyzes the attachment of serine to tRNA(Ser). Is also able to aminoacylate tRNA(Sec) with serine, to form the misacylated tRNA L-seryl-tRNA(Sec), which will be further converted into selenocysteinyl-tRNA(Sec). The polypeptide is Serine--tRNA ligase (Verminephrobacter eiseniae (strain EF01-2)).